We begin with the raw amino-acid sequence, 478 residues long: Membrane-bound lytic murein transglycosylase F (478 aa).

The N-terminal stretch at 1–29 (MFPDSSYLFSMRSLSRFLIAIFGCGALLA) is a signal peptide. The tract at residues 30-269 (SCDSFERSVL…RLLDRYYGHI (240 aa)) is non-LT domain. The segment at 271–478 (RLHHTDVNGI…RKEDDSWQEF (208 aa)) is LT domain. Glu-316 is a catalytic residue.

The protein in the N-terminal section; belongs to the bacterial solute-binding protein 3 family. It in the C-terminal section; belongs to the transglycosylase Slt family.

The protein resides in the cell outer membrane. The enzyme catalyses Exolytic cleavage of the (1-&gt;4)-beta-glycosidic linkage between N-acetylmuramic acid (MurNAc) and N-acetylglucosamine (GlcNAc) residues in peptidoglycan, from either the reducing or the non-reducing ends of the peptidoglycan chains, with concomitant formation of a 1,6-anhydrobond in the MurNAc residue.. Functionally, murein-degrading enzyme that degrades murein glycan strands and insoluble, high-molecular weight murein sacculi, with the concomitant formation of a 1,6-anhydromuramoyl product. Lytic transglycosylases (LTs) play an integral role in the metabolism of the peptidoglycan (PG) sacculus. Their lytic action creates space within the PG sacculus to allow for its expansion as well as for the insertion of various structures such as secretion systems and flagella. The sequence is that of Membrane-bound lytic murein transglycosylase F from Nitrosospira multiformis (strain ATCC 25196 / NCIMB 11849 / C 71).